We begin with the raw amino-acid sequence, 445 residues long: Exodeoxyribonuclease 7 large subunit (445 aa).

The protein belongs to the XseA family. As to quaternary structure, heterooligomer composed of large and small subunits.

Its subcellular location is the cytoplasm. It catalyses the reaction Exonucleolytic cleavage in either 5'- to 3'- or 3'- to 5'-direction to yield nucleoside 5'-phosphates.. Its function is as follows. Bidirectionally degrades single-stranded DNA into large acid-insoluble oligonucleotides, which are then degraded further into small acid-soluble oligonucleotides. In Staphylococcus haemolyticus (strain JCSC1435), this protein is Exodeoxyribonuclease 7 large subunit.